Here is a 464-residue protein sequence, read N- to C-terminus: ATP synthase subunit beta (464 aa).

150 to 157 (GGAGVGKT) provides a ligand contact to ATP.

Belongs to the ATPase alpha/beta chains family. In terms of assembly, F-type ATPases have 2 components, CF(1) - the catalytic core - and CF(0) - the membrane proton channel. CF(1) has five subunits: alpha(3), beta(3), gamma(1), delta(1), epsilon(1). CF(0) has three main subunits: a(1), b(2) and c(9-12). The alpha and beta chains form an alternating ring which encloses part of the gamma chain. CF(1) is attached to CF(0) by a central stalk formed by the gamma and epsilon chains, while a peripheral stalk is formed by the delta and b chains.

Its subcellular location is the cell membrane. The catalysed reaction is ATP + H2O + 4 H(+)(in) = ADP + phosphate + 5 H(+)(out). Functionally, produces ATP from ADP in the presence of a proton gradient across the membrane. The catalytic sites are hosted primarily by the beta subunits. The chain is ATP synthase subunit beta from Dehalococcoides mccartyi (strain ATCC BAA-2266 / KCTC 15142 / 195) (Dehalococcoides ethenogenes (strain 195)).